We begin with the raw amino-acid sequence, 105 residues long: Large ribosomal subunit protein uL24 (105 aa).

This sequence belongs to the universal ribosomal protein uL24 family. In terms of assembly, part of the 50S ribosomal subunit.

In terms of biological role, one of two assembly initiator proteins, it binds directly to the 5'-end of the 23S rRNA, where it nucleates assembly of the 50S subunit. Functionally, one of the proteins that surrounds the polypeptide exit tunnel on the outside of the subunit. This chain is Large ribosomal subunit protein uL24, found in Mycobacterium tuberculosis (strain CDC 1551 / Oshkosh).